Here is a 148-residue protein sequence, read N- to C-terminus: Lysozyme C (148 aa).

Residues 1 to 18 form the signal peptide; that stretch reads MKAVIILGLVLLSVTVQG. Positions 19 to 148 constitute a C-type lysozyme domain; it reads KIFERCELAR…VSQYVQGCGV (130 aa). Intrachain disulfides connect C24–C146, C48–C134, C83–C99, and C95–C113. Catalysis depends on residues E53 and D71.

This sequence belongs to the glycosyl hydrolase 22 family. Monomer.

The catalysed reaction is Hydrolysis of (1-&gt;4)-beta-linkages between N-acetylmuramic acid and N-acetyl-D-glucosamine residues in a peptidoglycan and between N-acetyl-D-glucosamine residues in chitodextrins.. In terms of biological role, lysozymes have primarily a bacteriolytic function; those in tissues and body fluids are associated with the monocyte-macrophage system and enhance the activity of immunoagents. This chain is Lysozyme C (LYZ), found in Erythrocebus patas (Red guenon).